A 160-amino-acid chain; its full sequence is Ureidoglycolate lyase (160 aa).

This sequence belongs to the ureidoglycolate lyase family. As to quaternary structure, homodimer. Ni(2+) is required as a cofactor.

The catalysed reaction is (S)-ureidoglycolate = urea + glyoxylate. It functions in the pathway nitrogen metabolism; (S)-allantoin degradation. Its function is as follows. Catalyzes the catabolism of the allantoin degradation intermediate (S)-ureidoglycolate, generating urea and glyoxylate. Involved in the anaerobic utilization of allantoin as sole nitrogen source. Reinforces the induction of genes involved in the degradation of allantoin and glyoxylate by producing glyoxylate. The chain is Ureidoglycolate lyase from Escherichia coli (strain K12 / MC4100 / BW2952).